The sequence spans 431 residues: Serine/threonine-protein kinase Sgk1 (431 aa).

A necessary for localization to the mitochondria region spans residues 1–60 (MTVKAEAARSTLTYSRMRGMVAILIAFMKQRRMGLNDFIQKIASNTYACKHAEVQSILKM). Positions 65-92 (EPELMNANPSPPPSPSQQINLGPSSNPH) are disordered. Serine 74 is subject to Phosphoserine. Serine 78 is subject to Phosphoserine; by MAPK7. A compositionally biased stretch (polar residues) spans 81 to 91 (QQINLGPSSNP). The 258-residue stretch at 98–355 (FHFLKVIGKG…FMEIKSHIFF (258 aa)) folds into the Protein kinase domain. Residues 104–112 (IGKGSFGKV) and lysine 127 contribute to the ATP site. The Nuclear localization signal motif lies at 131 to 141 (KKAILKKKEEK). Aspartate 222 (proton acceptor) is an active-site residue. Threonine 256 bears the Phosphothreonine; by PDPK1 mark. Residues 356 to 431 (SLINWDDLIN…SYAPPVDSFL (76 aa)) form the AGC-kinase C-terminal domain. Position 369 is a phosphothreonine; by PKA (threonine 369). 3 positions are modified to phosphoserine: serine 397, serine 401, and serine 422.

This sequence belongs to the protein kinase superfamily. AGC Ser/Thr protein kinase family. As to quaternary structure, homodimer; disulfide-linked. Interacts with MAPK3/ERK1, MAPK1/ERK2, MAP2K1/MEK1, MAP2K2/MEK2, NEDD4, NEDD4L, MAPT/TAU, MAPK7, CREB1, SLC9A3R2/NHERF2 and KCNJ1/ROMK1. Forms a trimeric complex with FBXW7 and NOTCH1 Associates with the mammalian target of rapamycin complex 2 (mTORC2) via an interaction with MAPKAP1/SIN1. Regulated by phosphorylation. Activated by phosphorylation on Ser-422 by mTORC2, transforming it into a substrate for PDPK1 which phosphorylates it on Thr-256. Phosphorylation on Ser-397 and Ser-401 are also essential for its activity. Phosphorylation on Ser-78 by MAPK7 is required for growth factor-induced cell cycle progression. Post-translationally, ubiquitinated by NEDD4L; which promotes proteasomal degradation. Ubiquitinated by SYVN1 at the endoplasmic reticulum; which promotes rapid proteasomal degradation and maintains a high turnover rate in resting cells.

Its subcellular location is the cytoplasm. It is found in the nucleus. The protein localises to the endoplasmic reticulum membrane. The protein resides in the cell membrane. It localises to the mitochondrion. The enzyme catalyses L-seryl-[protein] + ATP = O-phospho-L-seryl-[protein] + ADP + H(+). The catalysed reaction is L-threonyl-[protein] + ATP = O-phospho-L-threonyl-[protein] + ADP + H(+). Its activity is regulated as follows. Two specific sites, one in the kinase domain (Thr-256) and the other in the C-terminal regulatory region (Ser-422), need to be phosphorylated for its full activation. Phosphorylation at Ser-397 and Ser-401 are also essential for its activity. Activated by WNK1, WNK2, WNK3 and WNK4; which promote phosphorylation by mTORC2. In terms of biological role, serine/threonine-protein kinase which is involved in the regulation of a wide variety of ion channels, membrane transporters, cellular enzymes, transcription factors, neuronal excitability, cell growth, proliferation, survival, migration and apoptosis. Plays an important role in cellular stress response. Contributes to regulation of renal Na(+) retention, renal K(+) elimination, salt appetite, gastric acid secretion, intestinal Na(+)/H(+) exchange and nutrient transport, insulin-dependent salt sensitivity of blood pressure, salt sensitivity of peripheral glucose uptake, cardiac repolarization and memory consolidation. Up-regulates Na(+) channels: SCNN1A/ENAC, SCN5A and ASIC1/ACCN2, K(+) channels: KCNJ1/ROMK1, KCNA1-5, KCNQ1-5 and KCNE1, epithelial Ca(2+) channels: TRPV5 and TRPV6, chloride channels: BSND, CLCN2 and CFTR, glutamate transporters: SLC1A3/EAAT1, SLC1A2 /EAAT2, SLC1A1/EAAT3, SLC1A6/EAAT4 and SLC1A7/EAAT5, amino acid transporters: SLC1A5/ASCT2, SLC38A1/SN1 and SLC6A19, creatine transporter: SLC6A8, Na(+)/dicarboxylate cotransporter: SLC13A2/NADC1, Na(+)-dependent phosphate cotransporter: SLC34A2/NAPI-2B, glutamate receptor: GRIK2/GLUR6. Up-regulates carriers: SLC9A3/NHE3, SLC12A1/NKCC2, SLC12A3/NCC, SLC5A3/SMIT, SLC2A1/GLUT1, SLC5A1/SGLT1 and SLC15A2/PEPT2. Regulates enzymes: GSK3A/B, PMM2 and Na(+)/K(+) ATPase, and transcription factors: CTNNB1 and nuclear factor NF-kappa-B. Stimulates sodium transport into epithelial cells by enhancing the stability and expression of SCNN1A/ENAC. This is achieved by phosphorylating the NEDD4L ubiquitin E3 ligase, promoting its interaction with 14-3-3 proteins, thereby preventing it from binding to SCNN1A/ENAC and targeting it for degradation. Regulates store-operated Ca(+2) entry (SOCE) by stimulating ORAI1 and STIM1. Regulates KCNJ1/ROMK1 directly via its phosphorylation or indirectly via increased interaction with SLC9A3R2/NHERF2. Phosphorylates MDM2 and activates MDM2-dependent ubiquitination of p53/TP53. Phosphorylates MAPT/TAU and mediates microtubule depolymerization and neurite formation in hippocampal neurons. Phosphorylates SLC2A4/GLUT4 and up-regulates its activity. Phosphorylates APBB1/FE65 and promotes its localization to the nucleus. Phosphorylates MAPK1/ERK2 and activates it by enhancing its interaction with MAP2K1/MEK1 and MAP2K2/MEK2. Phosphorylates FBXW7 and plays an inhibitory role in the NOTCH1 signaling. Phosphorylates FOXO1 resulting in its relocalization from the nucleus to the cytoplasm. Phosphorylates FOXO3, promoting its exit from the nucleus and interference with FOXO3-dependent transcription. Phosphorylates BRAF and MAP3K3/MEKK3 and inhibits their activity. Phosphorylates SLC9A3/NHE3 in response to dexamethasone, resulting in its activation and increased localization at the cell membrane. Phosphorylates CREB1. Necessary for vascular remodeling during angiogenesis. This Mus musculus (Mouse) protein is Serine/threonine-protein kinase Sgk1 (Sgk1).